Here is a 349-residue protein sequence, read N- to C-terminus: Nicotinate-nucleotide--dimethylbenzimidazole phosphoribosyltransferase (349 aa).

The active-site Proton acceptor is the Glu315.

It belongs to the CobT family.

It carries out the reaction 5,6-dimethylbenzimidazole + nicotinate beta-D-ribonucleotide = alpha-ribazole 5'-phosphate + nicotinate + H(+). Its pathway is nucleoside biosynthesis; alpha-ribazole biosynthesis; alpha-ribazole from 5,6-dimethylbenzimidazole: step 1/2. Catalyzes the synthesis of alpha-ribazole-5'-phosphate from nicotinate mononucleotide (NAMN) and 5,6-dimethylbenzimidazole (DMB). This Variovorax paradoxus (strain S110) protein is Nicotinate-nucleotide--dimethylbenzimidazole phosphoribosyltransferase.